The sequence spans 211 residues: UPF0056 membrane protein BUsg_257 (211 aa).

A run of 6 helical transmembrane segments spans residues 14–34 (FFVS…FTTM), 54–74 (AFII…AFGI), 76–96 (INSF…SMIS), 116–136 (VVPL…TIVW), 144–164 (SDFL…WLCF), and 185–205 (IMGL…IKSI).

This sequence belongs to the UPF0056 (MarC) family.

The protein localises to the cell membrane. The chain is UPF0056 membrane protein BUsg_257 from Buchnera aphidicola subsp. Schizaphis graminum (strain Sg).